Consider the following 385-residue polypeptide: Carbamoyl phosphate synthase small chain (385 aa).

The segment at 1-185 is CPSase; the sequence is MSEPAILVLA…LGKGFIEQTQ (185 aa). L-glutamine contacts are provided by Ser-47, Gly-237, and Gly-239. Residues 189–376 enclose the Glutamine amidotransferase type-1 domain; the sequence is NVVAYDFGVK…INEMRKANLS (188 aa). Catalysis depends on Cys-265, which acts as the Nucleophile. L-glutamine is bound by residues Leu-266, Gln-269, Asn-307, Gly-309, and Phe-310. Residues His-349 and Glu-351 contribute to the active site.

The protein belongs to the CarA family. In terms of assembly, composed of two chains; the small (or glutamine) chain promotes the hydrolysis of glutamine to ammonia, which is used by the large (or ammonia) chain to synthesize carbamoyl phosphate. Tetramer of heterodimers (alpha,beta)4.

It catalyses the reaction hydrogencarbonate + L-glutamine + 2 ATP + H2O = carbamoyl phosphate + L-glutamate + 2 ADP + phosphate + 2 H(+). The catalysed reaction is L-glutamine + H2O = L-glutamate + NH4(+). Its pathway is amino-acid biosynthesis; L-arginine biosynthesis; carbamoyl phosphate from bicarbonate: step 1/1. The protein operates within pyrimidine metabolism; UMP biosynthesis via de novo pathway; (S)-dihydroorotate from bicarbonate: step 1/3. Functionally, small subunit of the glutamine-dependent carbamoyl phosphate synthetase (CPSase). CPSase catalyzes the formation of carbamoyl phosphate from the ammonia moiety of glutamine, carbonate, and phosphate donated by ATP, constituting the first step of 2 biosynthetic pathways, one leading to arginine and/or urea and the other to pyrimidine nucleotides. The small subunit (glutamine amidotransferase) binds and cleaves glutamine to supply the large subunit with the substrate ammonia. The polypeptide is Carbamoyl phosphate synthase small chain (Pasteurella multocida (strain Pm70)).